A 252-amino-acid polypeptide reads, in one-letter code: D-aminoacyl-tRNA deacylase (252 aa).

Belongs to the DtdA deacylase family. Monomer. It depends on Zn(2+) as a cofactor.

The enzyme catalyses a D-aminoacyl-tRNA + H2O = a tRNA + a D-alpha-amino acid + H(+). The catalysed reaction is glycyl-tRNA(Ala) + H2O = tRNA(Ala) + glycine + H(+). Functionally, D-aminoacyl-tRNA deacylase with broad substrate specificity. By recycling D-aminoacyl-tRNA to D-amino acids and free tRNA molecules, this enzyme counteracts the toxicity associated with the formation of D-aminoacyl-tRNA entities in vivo. This Pyrobaculum neutrophilum (strain DSM 2338 / JCM 9278 / NBRC 100436 / V24Sta) (Thermoproteus neutrophilus) protein is D-aminoacyl-tRNA deacylase.